We begin with the raw amino-acid sequence, 379 residues long: Transcription termination factor Rho (379 aa).

Residues 1-68 (MTDKYGFLRS…KRIFQINGRF (68 aa)) form the Rho RNA-BD domain. ATP contacts are provided by residues 111-116 (GKGQRG), 123-128 (KTGKTT), and arginine 154.

The protein belongs to the Rho family. In terms of assembly, homohexamer. The homohexamer assembles into an open ring structure.

Functionally, facilitates transcription termination by a mechanism that involves Rho binding to the nascent RNA, activation of Rho's RNA-dependent ATPase activity, and release of the mRNA from the DNA template. In Karelsulcia muelleri (strain SMDSEM) (Sulcia muelleri), this protein is Transcription termination factor Rho.